Consider the following 745-residue polypeptide: DNA ligase (745 aa).

The interval 1–27 (MRNHGPGSERKDACVSAPDPTFSDDVP) is disordered. Residues 57–61 (DAEYD), 106–107 (SL), and E135 contribute to the NAD(+) site. The active-site N6-AMP-lysine intermediate is K137. Positions 158 and 197 each coordinate NAD(+). A disordered region spans residues 216-235 (GKPPFANPRNAAAGSLRQKD). Residues K313 and K337 each coordinate NAD(+). Zn(2+) is bound by residues C431, C434, C450, and C456. The BRCT domain maps to 649–738 (DGPRLLDGIT…PEAARAARLS (90 aa)).

This sequence belongs to the NAD-dependent DNA ligase family. LigA subfamily. The cofactor is Mg(2+). Mn(2+) is required as a cofactor.

The catalysed reaction is NAD(+) + (deoxyribonucleotide)n-3'-hydroxyl + 5'-phospho-(deoxyribonucleotide)m = (deoxyribonucleotide)n+m + AMP + beta-nicotinamide D-nucleotide.. Functionally, DNA ligase that catalyzes the formation of phosphodiester linkages between 5'-phosphoryl and 3'-hydroxyl groups in double-stranded DNA using NAD as a coenzyme and as the energy source for the reaction. It is essential for DNA replication and repair of damaged DNA. The polypeptide is DNA ligase (Thermobifida fusca (strain YX)).